We begin with the raw amino-acid sequence, 117 residues long: Acylphosphatase (117 aa).

Positions 21-107 (RWRFRIRGLV…TGADWFEIRP (87 aa)) constitute an Acylphosphatase-like domain. Residues Arg-36 and Asn-54 contribute to the active site.

Belongs to the acylphosphatase family.

The catalysed reaction is an acyl phosphate + H2O = a carboxylate + phosphate + H(+). The protein is Acylphosphatase (acyP) of Synechococcus sp. (strain RCC307).